A 412-amino-acid chain; its full sequence is Multidrug resistance protein MdtG (412 aa).

Transmembrane regions (helical) follow at residues 19–39, 56–76, 90–110, 113–133, 144–164, 171–191, 222–242, 254–274, 288–308, 317–337, and 376–396; these read LGCF…PLYV, LVFS…GGLA, LGMS…QFLL, ALLG…ATQI, TLST…GFLA, TVFF…LFLI, LFVT…ILTL, IAFI…MSAP, ILIV…FVQT, FLLG…LVYN, and AVFL…TLSL.

It belongs to the major facilitator superfamily. DHA1 family. MdtG (TC 2.A.1.2.20) subfamily.

It is found in the cell inner membrane. This chain is Multidrug resistance protein MdtG, found in Klebsiella pneumoniae (strain 342).